We begin with the raw amino-acid sequence, 474 residues long: Dol-P-Glc:Glc(2)Man(9)GlcNAc(2)-PP-Dol alpha-1,2-glucosyltransferase (474 aa).

The Cytoplasmic segment spans residues 1 to 6 (MAQLEG). Residues 7-27 (YYFSAALSCTFLVSCLLFSAF) traverse the membrane as a helical segment. At 28-64 (SRALREPYMDEIFHLPQAQRYCEGRFSLSQWDPMITT) the chain is on the extracellular side. Residues 65 to 85 (LPGLYLVSVGVVKPASWLLGW) traverse the membrane as a helical segment. At 86-97 (SEHVICSIGVLR) the chain is on the cytoplasmic side. Residues 98-118 (FVNLLFSVGNFYLLYLLFRKV) form a helical membrane-spanning segment. Residues 119 to 126 (QPRNKASS) lie on the Extracellular side of the membrane. A helical transmembrane segment spans residues 127-147 (SIQRILSTLTLAVFPTLYFFN). Residues 148–150 (FLY) are Cytoplasmic-facing. A helical membrane pass occupies residues 151 to 171 (YTEAGSVFFTLFAYLMCLYGN). At 172–175 (HRTS) the chain is on the extracellular side. Residues 176 to 196 (ALLGFCGFMFRQTNIIWAAFC) form a helical membrane-spanning segment. Residues 197–256 (AGHLIAQKCSEAWKIELQKKKEERLAPTKGPLSELRRVLQFLLVYAMSLKNLRMLFLLTW) are Cytoplasmic-facing. Residues 257 to 277 (PYVLLLLAFFAFVVVNGGIVV) form a helical membrane-spanning segment. Residues 278–283 (GDRSSH) lie on the Extracellular side of the membrane. A helical membrane pass occupies residues 284–304 (EACLHFPQLFYFFSFTAFFSF). Residues 305 to 317 (PHLLSLTKVKTFL) lie on the Cytoplasmic side of the membrane. A helical membrane pass occupies residues 318 to 338 (SLVWKRRVQFSVVTLVSILLV). The Extracellular portion of the chain corresponds to 339-365 (WKFTYVHKYLLADNRHYTFYVWKRVFQ). A helical transmembrane segment spans residues 366–386 (RHEVVKYLLVPAYIFAGWAIA). The Cytoplasmic portion of the chain corresponds to 387–392 (DSLKAK). A helical membrane pass occupies residues 393–413 (SIFWNLMFFVCLVASTVPQKL). Residues 414 to 436 (LEFRYFILPYIIYRLNIPLPPIS) lie on the Extracellular side of the membrane. Residues 437–457 (RLVCELGCYTVVNFVTFYIFL) form a helical membrane-spanning segment. At 458-473 (NKTFQWPNSQDIQRFM) the chain is on the cytoplasmic side.

This sequence belongs to the ALG10 glucosyltransferase family. Interacts with KCNH1; may regulate KCNH1, possibly by regulating its N-glycosylation. Interacts with KCNH2; may reduce KCNH2 sensitivity to classic proarrhythmic drug blockade, possibly by regulating its N-glycosylation.

Its subcellular location is the endoplasmic reticulum membrane. The enzyme catalyses an alpha-D-Glc-(1-&gt;3)-alpha-D-Glc-(1-&gt;3)-alpha-D-Man-(1-&gt;2)-alpha-D-Man-(1-&gt;2)-alpha-D-Man-(1-&gt;3)-[alpha-D-Man-(1-&gt;2)-alpha-D-Man-(1-&gt;3)-[alpha-D-Man-(1-&gt;2)-alpha-D-Man-(1-&gt;6)]-alpha-D-Man-(1-&gt;6)]-beta-D-Man-(1-&gt;4)-beta-D-GlcNAc-(1-&gt;4)-alpha-D-GlcNAc-diphospho-di-trans,poly-cis-dolichol + a di-trans,poly-cis-dolichyl beta-D-glucosyl phosphate = a alpha-D-Glc-(1-&gt;2)-alpha-D-Glc-(1-&gt;3)-alpha-D-Glc-(1-&gt;3)-alpha-D-Man-(1-&gt;2)-alpha-D-Man-(1-&gt;2)-alpha-D-Man-(1-&gt;3)-[alpha-D-Man-(1-&gt;2)-alpha-D-Man-(1-&gt;3)-[alpha-D-Man-(1-&gt;2)-alpha-D-Man-(1-&gt;6)]-alpha-D-Man-(1-&gt;6)]-beta-D-Man-(1-&gt;4)-beta-D-GlcNAc-(1-&gt;4)-alpha-D-GlcNAc-diphospho-di-trans,poly-cis-dolichol + a di-trans,poly-cis-dolichyl phosphate + H(+). It participates in protein modification; protein glycosylation. Dol-P-Glc:Glc(2)Man(9)GlcNAc(2)-PP-Dol alpha-1,2-glucosyltransferase that operates in the biosynthetic pathway of dolichol-linked oligosaccharides, the glycan precursors employed in protein asparagine (N)-glycosylation. The assembly of dolichol-linked oligosaccharides begins on the cytosolic side of the endoplasmic reticulum membrane and finishes in its lumen. The sequential addition of sugars to dolichol pyrophosphate produces dolichol-linked oligosaccharides containing fourteen sugars, including two GlcNAcs, nine mannoses and three glucoses. Once assembled, the oligosaccharide is transferred from the lipid to nascent proteins by oligosaccharyltransferases. In the lumen of the endoplasmic reticulum, adds the third and last glucose residue from dolichyl phosphate glucose (Dol-P-Glc) onto the lipid-linked oligosaccharide intermediate Glc(2)Man(9)GlcNAc(2)-PP-Dol to produce Glc(3)Man(9)GlcNAc(2)-PP-Dol. This chain is Dol-P-Glc:Glc(2)Man(9)GlcNAc(2)-PP-Dol alpha-1,2-glucosyltransferase, found in Mus musculus (Mouse).